The chain runs to 722 residues: Bifunctional UDP-N-acetylglucosamine 2-epimerase/N-acetylmannosamine kinase (722 aa).

UDP contacts are provided by arginine 19, serine 23, arginine 113, histidine 220, and asparagine 253. CMP-N-acetyl-beta-neuraminate-binding residues include lysine 259, glutamate 271, lysine 280, and histidine 281. Residues valine 282, serine 301, serine 302, glutamate 307, and arginine 321 each contribute to the UDP site. An N-acetylmannosamine kinase region spans residues 406-722 (TLSALAVDLG…VLDYTTRRIH (317 aa)). Aspartate 413 is a binding site for Mg(2+). Glycine 416 is a binding site for an N-acyl-D-mannosamine 6-phosphate. Positions 417, 418, and 420 each coordinate ADP. 6 residues coordinate an N-acyl-D-mannosamine 6-phosphate: glycine 476, arginine 477, threonine 489, asparagine 516, aspartate 517, and glycine 545. Positions 476, 477, 489, 516, and 517 each coordinate an N-acyl-D-mannosamine. Aspartate 517 is an active-site residue. Glutamate 566 and histidine 569 together coordinate an N-acyl-D-mannosamine. Histidine 569 provides a ligand contact to an N-acyl-D-mannosamine 6-phosphate. The Zn(2+) site is built by histidine 569, cysteine 579, cysteine 581, and cysteine 586. Glutamate 588 is a binding site for an N-acyl-D-mannosamine 6-phosphate. An an N-acyl-D-mannosamine-binding site is contributed by glutamate 588.

This sequence in the N-terminal section; belongs to the UDP-N-acetylglucosamine 2-epimerase family. The protein in the C-terminal section; belongs to the ROK (NagC/XylR) family. Homodimer. Homotetramer. Homohexamer. The hexameric form exhibits both enzyme activities, whereas the dimeric form only catalyzes the phosphorylation of N-acyl-D-mannosamine. In terms of processing, phosphorylated. Phosphorylation by PKC activates the UDP-N-acetylglucosamine 2-epimerase activity. Widely expressed. Highest expression is observed in liver.

It is found in the cytoplasm. The protein resides in the cytosol. It carries out the reaction UDP-N-acetyl-alpha-D-glucosamine + H2O = aldehydo-N-acetyl-D-mannosamine + UDP + H(+). It catalyses the reaction an N-acyl-D-mannosamine + ATP = an N-acyl-D-mannosamine 6-phosphate + ADP + H(+). The protein operates within amino-sugar metabolism; N-acetylneuraminate biosynthesis. The UDP-N-acetylglucosamine 2-epimerase activity, in contrast to the N-acetylmannosamine kinase activity, exhibits allosteric regulation by cytidine monophosphate-N-acetylneuraminic acid (CMP-Neu5Ac), the end product of neuraminic acid biosynthesis. Moreover, the activity is contingent upon the oligomeric state of the enzyme. The monomeric form is inactive, while the dimeric form selectively catalyzes the phosphorylation of N-acetylmannosamine. The hexameric form, on the other hand, demonstrates full proficiency in both enzyme activities. Furthermore, the UDP-N-acetylglucosamine 2-epimerase activity is increased by PKC-mediated phosphorylation. Its function is as follows. Bifunctional enzyme that possesses both UDP-N-acetylglucosamine 2-epimerase and N-acetylmannosamine kinase activities, and serves as the initiator of the biosynthetic pathway leading to the production of N-acetylneuraminic acid (NeuAc), a critical precursor in the synthesis of sialic acids. By catalyzing this pivotal and rate-limiting step in sialic acid biosynthesis, this enzyme assumes a pivotal role in governing the regulation of cell surface sialylation. Sialic acids represent a category of negatively charged sugars that reside on the surface of cells as terminal components of glycoconjugates and mediate important functions in various cellular processes, including cell adhesion, signal transduction, and cellular recognition. This is Bifunctional UDP-N-acetylglucosamine 2-epimerase/N-acetylmannosamine kinase from Rattus norvegicus (Rat).